We begin with the raw amino-acid sequence, 203 residues long: Imidazoleglycerol-phosphate dehydratase (203 aa).

Residues 184–203 (DPRRSSQIPSSKGVLEQAGQ) are disordered.

It belongs to the imidazoleglycerol-phosphate dehydratase family.

It is found in the cytoplasm. It carries out the reaction D-erythro-1-(imidazol-4-yl)glycerol 3-phosphate = 3-(imidazol-4-yl)-2-oxopropyl phosphate + H2O. It functions in the pathway amino-acid biosynthesis; L-histidine biosynthesis; L-histidine from 5-phospho-alpha-D-ribose 1-diphosphate: step 6/9. This is Imidazoleglycerol-phosphate dehydratase from Prochlorococcus marinus (strain NATL1A).